The chain runs to 964 residues: Phosphoenolpyruvate carboxylase (964 aa).

Ser11 carries the phosphoserine modification. Catalysis depends on residues His172 and Lys600.

It belongs to the PEPCase type 1 family. Homotetramer. Mg(2+) is required as a cofactor.

It localises to the cytoplasm. The enzyme catalyses oxaloacetate + phosphate = phosphoenolpyruvate + hydrogencarbonate. Its pathway is photosynthesis; C4 acid pathway. Its activity is regulated as follows. By light-reversible phosphorylation. Through the carboxylation of phosphoenolpyruvate (PEP) it forms oxaloacetate, a four-carbon dicarboxylic acid source for the tricarboxylic acid cycle. The protein is Phosphoenolpyruvate carboxylase of Amaranthus hypochondriacus (Prince-of-Wales feather).